The chain runs to 600 residues: MAALAALAKKVWSARRLLVLLLVPLALLPILFALPPKEGRCLYVILLMAVYWCTEALPLSVTALLPIILFPFMGILPSSKVCPQYFLDTNFLFLSGLIMASAIEEWNLHRRIALKVLMLVGVQPARLILGMMVTTSFLSMWLSNTASTAMMLPIASAILKSLFGQREARKDLPREGDESTAAVQGNGLRTVPTEMQFLASSEGGHTEDAEAPMELPDDSKEEEHRRNIWKGFLISIPYSASIGGTATLTGTAPNLILLGQLKSFFPQCDVVNFGSWFIFAFPLMLLFLLVGWLWISFLYGGMSWRSWRKKKSKIRADAEDQAKAVIQEEFQNLGPIKFAEQAVFILFCTFAILLFSRDPKFIPGWASLFAPGFVSDAVTGVAIVTILFFFPSQKPSLKWWFDFKAPNSETEPLLSWKKAQETVPWNIILLLGGGFAMAKGCEESGLSAWIGGQLHPLEHVPPLLAVLLITVVIAFFTEFASNTATIIIFLPVLAELAIRLHVHPLYLMIPGTVGCSYAFMLPVSTPPNSIAFSTGHLLVKDMVRTGLLMNLMGVLLLSLAMNTWAQTIFQLGTFPDWANTHAANATALPPALTNNTVQTF.

Residues 1-16 (MAALAALAKKVWSARR) lie on the Cytoplasmic side of the membrane. Residues 17–37 (LLVLLLVPLALLPILFALPPK) form a helical membrane-spanning segment. Topologically, residues 38–55 (EGRCLYVILLMAVYWCTE) are extracellular. Residues 56–76 (ALPLSVTALLPIILFPFMGIL) traverse the membrane as a helical segment. At 77–82 (PSSKVC) the chain is on the cytoplasmic side. Residues 83–103 (PQYFLDTNFLFLSGLIMASAI) form a helical membrane-spanning segment. The Extracellular segment spans residues 104-137 (EEWNLHRRIALKVLMLVGVQPARLILGMMVTTSF). A helical transmembrane segment spans residues 138–158 (LSMWLSNTASTAMMLPIASAI). Residues 159-229 (LKSLFGQREA…KEEEHRRNIW (71 aa)) lie on the Cytoplasmic side of the membrane. A helical membrane pass occupies residues 230–250 (KGFLISIPYSASIGGTATLTG). At 251–278 (TAPNLILLGQLKSFFPQCDVVNFGSWFI) the chain is on the extracellular side. The helical transmembrane segment at 279–299 (FAFPLMLLFLLVGWLWISFLY) threads the bilayer. Residues 300–336 (GGMSWRSWRKKKSKIRADAEDQAKAVIQEEFQNLGPI) are Cytoplasmic-facing. Residues 337 to 357 (KFAEQAVFILFCTFAILLFSR) traverse the membrane as a helical segment. At 358–372 (DPKFIPGWASLFAPG) the chain is on the extracellular side. The chain crosses the membrane as a helical span at residues 373–393 (FVSDAVTGVAIVTILFFFPSQ). Topologically, residues 394-422 (KPSLKWWFDFKAPNSETEPLLSWKKAQET) are cytoplasmic. Residues 423–443 (VPWNIILLLGGGFAMAKGCEE) constitute an intramembrane region (helical). Topologically, residues 444–461 (SGLSAWIGGQLHPLEHVP) are cytoplasmic. The chain crosses the membrane as a helical span at residues 462–482 (PLLAVLLITVVIAFFTEFASN). The Extracellular segment spans residues 483–505 (TATIIIFLPVLAELAIRLHVHPL). A helical membrane pass occupies residues 506-526 (YLMIPGTVGCSYAFMLPVSTP). The Cytoplasmic segment spans residues 527–546 (PNSIAFSTGHLLVKDMVRTG). Residues 547–567 (LLMNLMGVLLLSLAMNTWAQT) form a helical membrane-spanning segment. Residues 568–600 (IFQLGTFPDWANTHAANATALPPALTNNTVQTF) lie on the Extracellular side of the membrane. N-linked (GlcNAc...) asparagine glycans are attached at residues Asn-584 and Asn-594.

Belongs to the SLC13A/DASS transporter (TC 2.A.47) family. NADC subfamily. As to expression, highly expressed in kidney, and at much lower levels in brain.

The protein localises to the cell membrane. It carries out the reaction succinate(out) + 3 Na(+)(out) = succinate(in) + 3 Na(+)(in). It catalyses the reaction 2-oxoglutarate(out) + 3 Na(+)(out) = 2-oxoglutarate(in) + 3 Na(+)(in). The catalysed reaction is N-acetyl-L-aspartate(out) + 3 Na(+)(out) = N-acetyl-L-aspartate(in) + 3 Na(+)(in). The enzyme catalyses fumarate(out) + 3 Na(+)(out) = fumarate(in) + 3 Na(+)(in). It carries out the reaction glutarate(out) + 3 Na(+)(out) = glutarate(in) + 3 Na(+)(in). It catalyses the reaction 2,2-dimethylsuccinate(out) + 3 Na(+)(out) = 2,2-dimethylsuccinate(in) + 3 Na(+)(in). The catalysed reaction is 2,3-dimethylsuccinate(out) + 3 Na(+)(out) = 2,3-dimethylsuccinate(in) + 3 Na(+)(in). The enzyme catalyses malate(out) + 3 Na(+)(out) = malate(in) + 3 Na(+)(in). It carries out the reaction itaconate(out) + 3 Na(+)(out) = itaconate(in) + 3 Na(+)(in). Its function is as follows. High-affinity sodium-dicarboxylate cotransporter that accepts a range of substrates with 4-6 carbon atoms, such as the citric acid cycle intermediates succinate and alpha-ketoglutarate (2-oxoglutarate), as well as other compounds including N-acetyl-L-aspartate. Transports the dicarboxylate into the cell with a probable stoichiometry of 3 Na(+) for 1 divalent dicarboxylate, rendering the process electrogenic. Can transport citrate in a Na(+)-dependent manner, recognizing the divalent form of citrate rather than the trivalent form which is normally found in blood. Imports itaconate in hepatocytes leading to activation of TFEB-dependent lysosomal biogenesis involved in antibacterial innate immune response. This Mus musculus (Mouse) protein is Na(+)/dicarboxylate cotransporter 3 (Slc13a3).